We begin with the raw amino-acid sequence, 1024 residues long: Gamma-tubulin complex component 5 (1024 aa).

Disordered regions lie at residues 155–203 (IGPY…LDPC) and 521–545 (TENEEKMSDNASASSGSDQGPSSRQ). The span at 189–203 (TPLEEQDQNRKLDPC) shows a compositional bias: basic and acidic residues. The span at 531–543 (ASASSGSDQGPSS) shows a compositional bias: low complexity.

Belongs to the TUBGCP family. In terms of assembly, component of the gamma-tubulin ring complex (gTuRC) consisting of TUBGCP2, TUBGCP3, TUBGCP4, TUBGCP5 and TUBGCP6 and gamma-tubulin TUBG1 or TUBG2. TUBGCP2, TUBGCP3, TUBGCP4, TUBGCP5 and TUBGCP6 assemble in a 5:5:2:1:1 stoichiometry; each is associated with a gamma-tubulin, thereby arranging 14 gamma-tubulins in a helical manner. Gamma-tubulin at the first position is blocked by TUBGCP3 at the last position, allowing 13 protafilaments to grow into a microtubule. The gTuRC (via TUBGCP3 and TUBGCP6) interacts with ACTB and MZT1; the interactions form a luminal bridge that stabilizes the initial structure during complex assembly. The gTuRC (via TUBGCP2) interacts with MZT2A/MZT2B and CDK5RAP2 (via CM1 motif); the interactions play a role in gTuRC activation. Widely expressed, with highest levels in heart and skeletal muscle and moderate levels in brain.

It is found in the cytoplasm. Its subcellular location is the cytoskeleton. The protein localises to the microtubule organizing center. The protein resides in the centrosome. Functionally, component of the gamma-tubulin ring complex (gTuRC) which mediates microtubule nucleation. The gTuRC regulates the minus-end nucleation of alpha-beta tubulin heterodimers that grow into microtubule protafilaments, a critical step in centrosome duplication and spindle formation. In Homo sapiens (Human), this protein is Gamma-tubulin complex component 5 (TUBGCP5).